A 289-amino-acid chain; its full sequence is Ribosomal RNA small subunit methyltransferase I (289 aa).

Belongs to the methyltransferase superfamily. RsmI family.

It is found in the cytoplasm. The catalysed reaction is cytidine(1402) in 16S rRNA + S-adenosyl-L-methionine = 2'-O-methylcytidine(1402) in 16S rRNA + S-adenosyl-L-homocysteine + H(+). Its function is as follows. Catalyzes the 2'-O-methylation of the ribose of cytidine 1402 (C1402) in 16S rRNA. The protein is Ribosomal RNA small subunit methyltransferase I of Helicobacter pylori (strain J99 / ATCC 700824) (Campylobacter pylori J99).